The chain runs to 195 residues: Coiled-coil domain-containing protein 184 (195 aa).

A coiled-coil region spans residues 39–68 (GMKELMEHLKAQLQALFEDVRAMRGALDEQ). The tract at residues 98-175 (RQGGLGVVGN…AGLLGGDGPL (78 aa)) is disordered. A compositionally biased stretch (acidic residues) spans 135-146 (PEDEEDDDEEEK).

This is Coiled-coil domain-containing protein 184 (CCDC184) from Bos taurus (Bovine).